The following is a 2841-amino-acid chain: Neurofibromin (2841 aa).

The residue at position 2 (Ala-2) is an N-acetylalanine. A phosphoserine mark is found at Ser-866 and Ser-878. A Ras-GAP domain is found at 1253-1484 (HLLYQLLWNM…DLARRFFLDI (232 aa)). Residues 1582-1740 (EKEEFKALKT…ATLALEEDLK (159 aa)) enclose the CRAL-TRIO domain. The tract at residues 1582 to 1839 (EKEEFKALKT…RTRWELSQPD (258 aa)) is lipid binding. 2 positions are modified to phosphoserine: Ser-2190 and Ser-2469. The residue at position 2516 (Thr-2516) is a Phosphothreonine. Ser-2517, Ser-2523, Ser-2525, and Ser-2545 each carry phosphoserine. Positions 2557 to 2573 (KRQEMESGITTPPKMRR) match the Bipartite nuclear localization signal motif. Thr-2567 carries the post-translational modification Phosphothreonine. Ser-2599, Ser-2804, and Ser-2819 each carry phosphoserine. Residues 2786-2841 (SLATSQHSPGLDKENVELSPTAGHCNSGRTRHGSASQVQKQRSAGSFKRNSIKKIV) are disordered. Positions 2818-2829 (GSASQVQKQRSA) are enriched in polar residues.

Interacts with HTR6. Interacts with SPRED2. In terms of processing, ubiquitinated by RNF7/RBX2, leading to its degradation. As to expression, expressed predominantly in brain, spinal cord and testis. In terms of tissue distribution, expressed predominantly in adrenal gland, kidney, ovary and lung. Widely and more weakly expressed. Predominantly expressed in adrenal gland. As to expression, widely and more weakly expressed. Expressed mainly in testis.

Its subcellular location is the nucleus. It is found in the nucleolus. The protein resides in the cell membrane. Stimulates the GTPase activity of Ras. NF1 shows greater affinity for Ras GAP, but lower specific activity. May be a regulator of Ras activity. This Mus musculus (Mouse) protein is Neurofibromin (Nf1).